The sequence spans 182 residues: Ribosome-recycling factor (182 aa).

The protein belongs to the RRF family.

The protein resides in the cytoplasm. Responsible for the release of ribosomes from messenger RNA at the termination of protein biosynthesis. May increase the efficiency of translation by recycling ribosomes from one round of translation to another. The polypeptide is Ribosome-recycling factor (Hydrogenobaculum sp. (strain Y04AAS1)).